Reading from the N-terminus, the 155-residue chain is Small ribosomal subunit protein uS7 (155 aa).

It belongs to the universal ribosomal protein uS7 family. In terms of assembly, part of the 30S ribosomal subunit. Contacts proteins S9 and S11.

In terms of biological role, one of the primary rRNA binding proteins, it binds directly to 16S rRNA where it nucleates assembly of the head domain of the 30S subunit. Is located at the subunit interface close to the decoding center, probably blocks exit of the E-site tRNA. This chain is Small ribosomal subunit protein uS7, found in Xylella fastidiosa (strain M23).